Reading from the N-terminus, the 1382-residue chain is Hepatocyte growth factor receptor (1382 aa).

Positions 1–24 (MKASAVLAPGILVILFTLVQKSNC) are cleaved as a signal peptide. The Extracellular portion of the chain corresponds to 25–933 (ECKEALVKSK…VIVQPDQNIT (909 aa)). The Sema domain maps to 27–516 (KEALVKSKMN…TGKKITKIPL (490 aa)). Asn45 carries N-linked (GlcNAc...) asparagine glycosylation. Disulfide bonds link Cys95–Cys101, Cys98–Cys160, Cys133–Cys141, and Cys173–Cys176. A glycan (N-linked (GlcNAc...) asparagine) is linked at Asn106. 2 N-linked (GlcNAc...) asparagine glycosylation sites follow: Asn203 and Asn359. 2 disulfide bridges follow: Cys299–Cys364 and Cys386–Cys398. N-linked (GlcNAc...) asparagine glycans are attached at residues Asn400 and Asn406. 4 disulfides stabilise this stretch: Cys521/Cys539, Cys527/Cys562, Cys530/Cys546, and Cys542/Cys552. 3 IPT/TIG domains span residues 564–656 (PTIY…FSYV), 658–740 (PIIT…FSYQ), and 743–837 (PIIY…LIYV). Thr583 is a glycosylation site (O-linked (Man) threonine). Asn608 and Asn636 each carry an N-linked (GlcNAc...) asparagine glycan. 2 O-linked (Man) threonine glycosylation sites follow: Thr677 and Thr762. Asn786, Asn880, and Asn931 each carry an N-linked (GlcNAc...) asparagine glycan. A helical membrane pass occupies residues 934 to 956 (EFIVGILSISGILLTLLGLLLWW). The Cytoplasmic portion of the chain corresponds to 957-1382 (KKKKQIKDLG…QDNFDSEGNT (426 aa)). Ser967 bears the Phosphoserine mark. Residue Thr978 is modified to Phosphothreonine. 3 positions are modified to phosphoserine: Ser991, Ser998, and Ser1001. A Phosphotyrosine modification is found at Tyr1004. In terms of domain architecture, Protein kinase spans 1079–1346 (VHFNEVIGRG…RISAIFSTFI (268 aa)). ATP contacts are provided by residues 1085-1093 (IGRGHFGCV) and Lys1111. The active-site Proton acceptor is the Asp1205. Residues 1213–1382 (LDENFTVKVA…QDNFDSEGNT (170 aa)) are interaction with RANBP9. Phosphotyrosine is present on Tyr1231. Phosphotyrosine; by autocatalysis occurs at positions 1235 and 1236. Position 1290 is a phosphothreonine (Thr1290). Positions 1321 to 1360 (WHPKAELRPSFSELVSRISAIFSTFIGEHYVHVNATYVNI) are interaction with MUC20. Residues Tyr1350 and Tyr1357 each carry the phosphotyrosine; by autocatalysis modification. Tyr1366 bears the Phosphotyrosine mark.

The protein belongs to the protein kinase superfamily. Tyr protein kinase family. As to quaternary structure, heterodimer made of an alpha chain (50 kDa) and a beta chain (145 kDa) which are disulfide linked. Binds PLXNB1. Interacts when phosphorylated with downstream effectors including STAT3, PIK3R1, SRC, PCLG1, GRB2 and GAB1. Interacts with SPSB1, SPSB2 and SPSB4. Interacts with INPP5D/SHIP1. When phosphorylated at Tyr-1357, interacts with INPPL1/SHIP2. Interacts with RANBP9 and RANBP10, as well as SPSB1, SPSB2, SPSB3 and SPSB4. SPSB1 binding occurs in the presence and in the absence of HGF, however HGF treatment has a positive effect on this interaction. Interacts with MUC20; prevents interaction with GRB2 and suppresses hepatocyte growth factor-induced cell proliferation. Interacts with GRB10. Interacts with PTPN1 and PTPN2. Interacts with tensin TNS3. Interacts (when phosphorylated) with tensin TNS4 (via SH2 domain); the interaction increases MET protein stability by inhibiting MET endocytosis and subsequent lysosomal degradation. In terms of processing, autophosphorylated in response to ligand binding on Tyr-1235 and Tyr-1236 in the kinase domain leading to further phosphorylation of Tyr-1350 and Tyr-1357 in the C-terminal multifunctional docking site. Dephosphorylated by PTPRJ at Tyr-1350 and Tyr-1366. Dephosphorylated by PTPN1 and PTPN2. Ubiquitinated. Ubiquitination by CBL regulates the receptor stability and activity through proteasomal degradation. Post-translationally, O-mannosylation of IPT/TIG domains by TMEM260 is required for protein maturation. O-mannosylated residues are composed of single mannose glycans that are not elongated or modified.

The protein localises to the membrane. It carries out the reaction L-tyrosyl-[protein] + ATP = O-phospho-L-tyrosyl-[protein] + ADP + H(+). Its activity is regulated as follows. In its inactive state, the C-terminal tail interacts with the catalytic domain and inhibits the kinase activity. Upon ligand binding, the C-terminal tail is displaced and becomes phosphorylated, thus increasing the kinase activity. Its function is as follows. Receptor tyrosine kinase that transduces signals from the extracellular matrix into the cytoplasm by binding to hepatocyte growth factor/HGF ligand. Regulates many physiological processes including proliferation, scattering, morphogenesis and survival. Ligand binding at the cell surface induces autophosphorylation of MET on its intracellular domain that provides docking sites for downstream signaling molecules. Following activation by ligand, interacts with the PI3-kinase subunit PIK3R1, PLCG1, SRC, GRB2, STAT3 or the adapter GAB1. Recruitment of these downstream effectors by MET leads to the activation of several signaling cascades including the RAS-ERK, PI3 kinase-AKT, or PLCgamma-PKC. The RAS-ERK activation is associated with the morphogenetic effects while PI3K/AKT coordinates prosurvival effects. During embryonic development, MET signaling plays a role in gastrulation, development and migration of muscles and neuronal precursors, angiogenesis and kidney formation. In adults, participates in wound healing as well as organ regeneration and tissue remodeling. Also promotes differentiation and proliferation of hematopoietic cells. The protein is Hepatocyte growth factor receptor (MET) of Atelerix albiventris (Middle-African hedgehog).